Consider the following 88-residue polypeptide: MRLDKFLKVSRLIKRRTLAKEVCEQGRITVNGNVAKAGTVVKEGDELVIRFGQKLVTVEITNVKETVRKEEASTLYEVKKEEPISKSE.

Positions 1 to 67 (MRLDKFLKVS…VEITNVKETV (67 aa)) constitute an S4 RNA-binding domain.

The protein belongs to the RqcP family. As to quaternary structure, associates with stalled 50S ribosomal subunits. Binds to RqcH, 23S rRNA and the P-site tRNA. Does not require RqcH for association with 50S subunits.

Functionally, key component of the ribosome quality control system (RQC), a ribosome-associated complex that mediates the extraction of incompletely synthesized nascent chains from stalled ribosomes and their subsequent degradation. RqcH recruits Ala-charged tRNA, and with RqcP directs the elongation of stalled nascent chains on 50S ribosomal subunits, leading to non-templated C-terminal alanine extensions (Ala tail). The Ala tail promotes nascent chain degradation. RqcP is associated with the translocation-like movement of the peptidyl-tRNA from the A-site into the P-site. The polypeptide is RQC P-site tRNA stabilizing factor (Halalkalibacterium halodurans (strain ATCC BAA-125 / DSM 18197 / FERM 7344 / JCM 9153 / C-125) (Bacillus halodurans)).